Here is a 212-residue protein sequence, read N- to C-terminus: Probable 2-dehydro-3-deoxy-6-phosphogalactonate aldolase (212 aa).

Arginine 18 contributes to the 2-dehydro-3-deoxy-6-phospho-D-galactonate binding site. Glutamate 41 (proton donor/acceptor) is an active-site residue. Threonine 70, lysine 130, glycine 160, glycine 180, and serine 181 together coordinate 2-dehydro-3-deoxy-6-phospho-D-galactonate. Catalysis depends on lysine 130, which acts as the Schiff-base intermediate with substrate.

It belongs to the KHG/KDPG aldolase family. In terms of assembly, homotrimer.

It catalyses the reaction 2-dehydro-3-deoxy-6-phospho-D-galactonate = D-glyceraldehyde 3-phosphate + pyruvate. It participates in carbohydrate acid metabolism; D-galactonate degradation; D-glyceraldehyde 3-phosphate and pyruvate from D-galactonate: step 3/3. Functionally, involved in the degradation of galactose via the DeLey-Doudoroff pathway. Catalyzes the reversible, stereospecific retro-aldol cleavage of 2-keto-3-deoxy-6-phosphogalactonate (KDPGal) to pyruvate and D-glyceraldehyde-3-phosphate. In Rhizobium meliloti (strain 1021) (Ensifer meliloti), this protein is Probable 2-dehydro-3-deoxy-6-phosphogalactonate aldolase (dgoA).